Consider the following 465-residue polypeptide: MRIFNTMTRRKEEFVPLIPGEIKMYVCGPTVYNFFHIGNARTFVVFDTVRRYFEYKGYKVNFVQNFTDIDDKMIKKANDENITVQQLGDRFIDEYYRDADALNIKRATVNPRATLYISKIIEFIQDLIDKGYAYSVDGDVYFNAKKFNNYGKLSGQNIEQLQSGARIDIDERKKNPMDFAVWKSEKKGEPSWESPWGMGRPGWHIECSCMAYNILGETIDIHAGGSDLKFPHHENEIAQSEGRTGKVFAKYWMHSAFVNINNQKMSKSLNNFFTTREILDKYEPDVIRLFMLSGHYRTPINFSIELLDSTKSALDRICNSIINLEELSSKVKNDGILDSEIKYKEHLNSYKQRYIEKMDDDFNTADAISVIFDLIRDINTNIDENSSMEIIKYSLALIRELGSPLGILQKSKRGSIETEVELLIEKRQKARKDKNWALADKIRDDLKDKGIILEDTSDGVRWKRV.

Cysteine 27 provides a ligand contact to Zn(2+). Residues 29–39 carry the 'HIGH' region motif; the sequence is PTVYNFFHIGN. Zn(2+) contacts are provided by cysteine 207, histidine 232, and glutamate 236. The 'KMSKS' region motif lies at 264-268; the sequence is KMSKS. Lysine 267 is a binding site for ATP.

It belongs to the class-I aminoacyl-tRNA synthetase family. Monomer. Zn(2+) is required as a cofactor.

Its subcellular location is the cytoplasm. It catalyses the reaction tRNA(Cys) + L-cysteine + ATP = L-cysteinyl-tRNA(Cys) + AMP + diphosphate. This chain is Cysteine--tRNA ligase, found in Clostridium kluyveri (strain NBRC 12016).